The chain runs to 115 residues: NADH-ubiquinone oxidoreductase chain 3 (115 aa).

3 helical membrane-spanning segments follow: residues 3 to 23 (LLMA…IAFW), 55 to 75 (FFLV…LLPL), and 84 to 104 (LSAM…GLMY).

Belongs to the complex I subunit 3 family. As to quaternary structure, core subunit of respiratory chain NADH dehydrogenase (Complex I) which is composed of 45 different subunits. Interacts with TMEM186. Interacts with TMEM242.

The protein localises to the mitochondrion inner membrane. It carries out the reaction a ubiquinone + NADH + 5 H(+)(in) = a ubiquinol + NAD(+) + 4 H(+)(out). In terms of biological role, core subunit of the mitochondrial membrane respiratory chain NADH dehydrogenase (Complex I) which catalyzes electron transfer from NADH through the respiratory chain, using ubiquinone as an electron acceptor. Essential for the catalytic activity of complex I. The sequence is that of NADH-ubiquinone oxidoreductase chain 3 from Sigmodon ochrognathus (Yellow-nosed cotton rat).